The chain runs to 1100 residues: MLERIQQLVNAVNDPRSDVATKRQAIELLNGIKSSENALEIFISLVINENSNDLLKFYGLSTLIELMTEGVNANPNGLNLVKFEITKWLKFQVLGNKQTKLPDFLMNKISEVLTTLFMLMYSDCNGNQWNSFFDDLMSLFQVDSAISNTSPSTDGNILLGLEFFNKLCLMINSEIADQSFIRSKESQLKNNNIKDWMRDNDIMKLSNVWFQCLKLDEQIVSQCPGLINSTLDCIGSFISWIDINLIIDANNYYLQLIYKFLNLKETKISCYNCILAIISKKMKPMDKLAFLNMINLTNELTYYHQAISMNPQIITFDNLEVWESLTKLITSFGIEFTIIIEQVNDDQKLDTLYKQSVISNVDSILLEKIIPILLEFMNNEFDSITAKTFPFWSNYLAFLKKYKASSPNFVPLHKDFLDNFQQICFKRMKFSDDEVTQDDFEEFNETVRFKLKNFQEIIVVIDPSLFLNNISQEISANLMNCKNESWQVFELTIYQIFNLSECIKNNYFGLNKNEIMTSQPSLTLVRFLNELLMMKDFLLAIDNEQIQILFMELIVKNYNFIFSTSANTANATDDDEKYLLILNIFMSSFAMFNKRENVRLRSWYLFTRFLKLTRINLKKILFANKNLVNEITNKISPLLHIKVTSINAQGTDDNDTIFDNQLYIFEGIGFIITLNNSSQELTAATANTPIDYDILDQILTPLFTQLEGCITQGASPVVILECHHILMAIGTLARGLHIGLVPENQVNNMVVNKKLINDSLIHKFSNIAEVILVTFSFFNKFENIRDASRFTFARLIPILSNKILPFINKLIELILSSTDLKSWEMIDFLGFLSQLIHMFHTDTDCYQLFNQLLTPLINKIHSIIEEIDEQHDQQSSSNKPIDTAVTATSVNKNIVVTDSYRDKILLKKAYCTFLQSFTNNSVTSILLSDINRAILPVILNDLVTYTPQEIQETSMMKVSLNVLCNFIKCFGNGTCLDNDDINKDPNLKIDGLNEYFIMKCVPIIFEIPFNPIYKFNIKEGSFKTMAYDLARLLRELFIVSSNPTTNENECVKYLTQIYLPQIQLPQELTIQLVNMLTTMGQKQFEKWFVDNFISVLKQGQ.

This sequence belongs to the exportin family. As to quaternary structure, interacts with GSP1, GSP2, NSP1, NUP2 and UTP8.

It localises to the nucleus. The protein resides in the cytoplasm. In terms of biological role, tRNA nucleus export receptor which facilitates tRNA translocation across the nuclear pore complex. Preferentially interacts with tRNAs with mature 5'- and 3'-termini and does not distinguish between intron-containing and spliced tRNAs. In the nucleus binds to tRNA and to the Ran-GTPases GSP1 or GSP2 in their active GTP-bound form. Docking of this trimeric complex to the nuclear pore complex (NPC) is mediated through binding to nucleoporins. Upon transit of a nuclear export complex into the cytoplasm, disassembling of the complex and hydrolysis of Ran-GTP to Ran-GDP cause release of the tRNA from the export receptor. The directionality of nuclear export is thought to be conferred by an asymmetric distribution of the GTP- and GDP-bound forms of Ran between the cytoplasm and nucleus. Involved in pre-tRNA splicing, probably by affecting the interaction of pre-tRNA with splicing endonuclease. In Saccharomyces cerevisiae (strain YJM789) (Baker's yeast), this protein is Exportin-T (LOS1).